Here is a 231-residue protein sequence, read N- to C-terminus: Small ribosomal subunit protein uS2 (231 aa).

Residues 1-23 are disordered; the sequence is MKVTNLSEKEERGGELTEAEKEE. Basic and acidic residues predominate over residues 7-23; sequence SEKEERGGELTEAEKEE.

Belongs to the universal ribosomal protein uS2 family.

This is Small ribosomal subunit protein uS2 (rps2) from Saccharolobus solfataricus (strain ATCC 35092 / DSM 1617 / JCM 11322 / P2) (Sulfolobus solfataricus).